Here is a 542-residue protein sequence, read N- to C-terminus: Protein NODULATION SIGNALING PATHWAY 1 (542 aa).

Residues 73 to 150 are disordered; sequence TSTTSLEPCG…SNCNSGNSKE (78 aa). A compositionally biased stretch (basic and acidic residues) spans 92–103; sequence LPKKRNATDESS. Over residues 136 to 148 the composition is skewed to low complexity; the sequence is AKANGSNCNSGNS. One can recognise a GRAS domain in the interval 145–532; that stretch reads SGNSKEGRWA…QPVSFCSLWK (388 aa). Residues 152 to 214 are leucine repeat I (LRI); it reads RWAEQLLNPC…HLSSSSSSPT (63 aa). Positions 233-332 are VHIID; that stretch reads LLKFYEVSPW…GYNYYPRLLG (100 aa). The VHIID signature appears at 269–273; sequence LHILD. Residues 333–357 form a leucine repeat II (LRII) region; that stretch reads YAQSININLQINRIENHSLQTLNAQ. Residues 367-452 are PFYRE; the sequence is LIVCAQFRLH…RESDERRVME (86 aa). Positions 455-532 are SAW; sequence AAKALTNQRE…QPVSFCSLWK (78 aa).

Belongs to the GRAS family. In terms of tissue distribution, highly expressed in roots.

Its subcellular location is the nucleus. In terms of biological role, transcriptional regulator essential for Nod-factor-induced gene expression. Acts downstream of calcium spiking and a calcium/calmodulin-dependent protein kinase required for activation of early nodulation gene expression. Acts as a common symbiosis gene that positively contributes to the early steps of the arbuscular mycorrhizal fungus and rhizobial infection processes in roots. Transcription factor involved in the positive regulation of the beta-carotene isomerase D27, which participates in a pathway leading to biosynthesis of strigolactones in roots. The polypeptide is Protein NODULATION SIGNALING PATHWAY 1 (Lotus japonicus (Lotus corniculatus var. japonicus)).